Here is a 659-residue protein sequence, read N- to C-terminus: Fructose-1,6-bisphosphatase class 3 (659 aa).

The protein belongs to the FBPase class 3 family. It depends on Mn(2+) as a cofactor.

The enzyme catalyses beta-D-fructose 1,6-bisphosphate + H2O = beta-D-fructose 6-phosphate + phosphate. Its pathway is carbohydrate biosynthesis; gluconeogenesis. This Clostridium botulinum (strain Alaska E43 / Type E3) protein is Fructose-1,6-bisphosphatase class 3.